A 399-amino-acid chain; its full sequence is Chromosomal replication initiator protein DnaA (399 aa).

A domain I, interacts with DnaA modulators region spans residues 1 to 64 (MELNALIKKI…EEEVRKLIEV (64 aa)). The tract at residues 64–77 (VKEKEEKKKVEIKD) is domain II. The domain III, AAA+ region stretch occupies residues 78 to 290 (FLNPKYTLEN…GKIKLIKLKG (213 aa)). ADP contacts are provided by Ile-89, Asn-94, Gly-122, Thr-123, Gly-124, Lys-125, Thr-126, and His-127. Position 89 (Ile-89) interacts with ATP. Residue Gly-122 participates in ATP binding. ATP is bound by residues Gly-124, Lys-125, Thr-126, and His-127. Position 126 (Thr-126) interacts with Mg(2+). Residue Val-156 participates in ssDNA binding. ATP is bound at residue Asp-180. Position 181 (Asp-181) interacts with Mg(2+). 3 residues coordinate ssDNA: Lys-188, Arg-190, and Thr-191. Arg-277 contacts ATP. A domain IV, binds dsDNA region spans residues 291–399 (FEGLERKERK…LEKQAFDKIC (109 aa)).

The protein belongs to the DnaA family. In terms of assembly, in the presence of ATP analog AMP-PCP forms a linear, right-handed spiral filament with 4 subunits arranged head-to-tail, about 122 Angstroms wide and about 360 Angstroms long. Mg(2+)-AMP-PCP binds at the subunit interface with the gamma phosphate coordinated by adjacent subunits. dsDNA probably wraps on the outside of the filament. ssDNA binds to the center of the helical filament via the AAA+ domain, which stretches the DNA.

It is found in the cytoplasm. Its function is as follows. Plays an essential role in the initiation and regulation of chromosomal replication. ATP-DnaA binds to the origin of replication (oriC) to initiate formation of the DNA replication initiation complex once per cell cycle. Binds the DnaA box (a 9 base pair repeat at the origin) and separates the double-stranded (ds)DNA. Forms a right-handed helical filament on oriC DNA; dsDNA binds to the exterior of the filament while single-stranded (ss)DNA is stabiized in the filament's interior. The ATP-DnaA-oriC complex binds and stabilizes one strand of the AT-rich DNA unwinding element (DUE), permitting loading of DNA polymerase. After initiation quickly degrades to an ADP-DnaA complex that is not apt for DNA replication. Binds acidic phospholipids. Functionally, able to melt short unstable dsDNA (15-mer with melting temperature, TM, 43 degrees Celsius) in the presence of a non-hydrolyzable ATP analog; a more stable dsDNA (20-mer, TM 55 degrees Celsius) is poor substrate. ADP does not support dsDNA melting. Addition of DnaA-AMP-PCP (an ATP analog, beta,gamma-methyleneadenosine 5'-triphosphate) to an oric-containing plasmid causes a DNA shift to more positively supercoiled topological species, stabilizing a positive wrap and right-handed filament as seen in the crystal structure without DNA. Filament formation generated by positive supercoiling may destabilize the origin unwinding element through compensatory negative supercoiling strain. In Aquifex aeolicus (strain VF5), this protein is Chromosomal replication initiator protein DnaA.